The following is a 66-amino-acid chain: Beta-toxin Chui4 (66 aa).

Residues Lys1 to Lys66 form the LCN-type CS-alpha/beta domain. 4 cysteine pairs are disulfide-bonded: Cys12-Cys65, Cys16-Cys41, Cys25-Cys46, and Cys29-Cys48.

It belongs to the long (4 C-C) scorpion toxin superfamily. Sodium channel inhibitor family. Beta subfamily. As to expression, expressed by the venom gland.

Its subcellular location is the secreted. Beta toxins bind voltage-independently at site-4 of sodium channels (Nav) and shift the voltage of activation toward more negative potentials thereby affecting sodium channel activation and promoting spontaneous and repetitive firing. Acts on human sodium channel Nav1.6/SCN8A. Also able to weakly shift the activation curves of human Nav1.2/SCN2A and Nav1.4/SCN4A. In Centruroides huichol (Scorpion), this protein is Beta-toxin Chui4.